Here is a 181-residue protein sequence, read N- to C-terminus: ATP synthase subunit b 2 (181 aa).

Over residues 1–18 (MATTTHDAGHGAAEAAHG) the composition is skewed to low complexity. Residues 1 to 20 (MATTTHDAGHGAAEAAHGSS) form a disordered region. The helical transmembrane segment at 34–54 (IFWLLVTLVVIYLILSRIALP) threads the bilayer.

It belongs to the ATPase B chain family. In terms of assembly, F-type ATPases have 2 components, F(1) - the catalytic core - and F(0) - the membrane proton channel. F(1) has five subunits: alpha(3), beta(3), gamma(1), delta(1), epsilon(1). F(0) has three main subunits: a(1), b(2) and c(10-14). The alpha and beta chains form an alternating ring which encloses part of the gamma chain. F(1) is attached to F(0) by a central stalk formed by the gamma and epsilon chains, while a peripheral stalk is formed by the delta and b chains.

It localises to the cell inner membrane. F(1)F(0) ATP synthase produces ATP from ADP in the presence of a proton or sodium gradient. F-type ATPases consist of two structural domains, F(1) containing the extramembraneous catalytic core and F(0) containing the membrane proton channel, linked together by a central stalk and a peripheral stalk. During catalysis, ATP synthesis in the catalytic domain of F(1) is coupled via a rotary mechanism of the central stalk subunits to proton translocation. Functionally, component of the F(0) channel, it forms part of the peripheral stalk, linking F(1) to F(0). The b'-subunit is a diverged and duplicated form of b found in plants and photosynthetic bacteria. The chain is ATP synthase subunit b 2 (atpF2) from Ruegeria sp. (strain TM1040) (Silicibacter sp.).